Here is a 403-residue protein sequence, read N- to C-terminus: Queuine tRNA-ribosyltransferase catalytic subunit 1 (403 aa).

An N-acetylalanine modification is found at Ala-2. Asp-105 serves as the catalytic Proton acceptor. 105–109 (DSGGF) contacts queuine. Residue Ser-139 is modified to Phosphoserine. Asp-159, Gln-202, and Gly-229 together coordinate queuine. The interval 260 to 266 (GVGYATD) is RNA binding. The Nucleophile role is filled by Asp-279. The tract at residues 284 to 288 (TRTAR) is RNA binding; important for wobble base 34 recognition. Zn(2+) is bound by residues Cys-317, Cys-319, Cys-322, and His-348.

The protein belongs to the queuine tRNA-ribosyltransferase family. As to quaternary structure, heterodimer of a catalytic subunit QTRT1 and an accessory subunit QTRT2. It depends on Zn(2+) as a cofactor. In terms of tissue distribution, expressed in brain, heart, kidney, liver, ling, skeletal muscle, spleen and testis.

It is found in the cytoplasm. Its subcellular location is the mitochondrion outer membrane. It localises to the nucleus. The catalysed reaction is guanosine(34) in tRNA + queuine = queuosine(34) in tRNA + guanine. Catalytic subunit of the queuine tRNA-ribosyltransferase (TGT) that catalyzes the base-exchange of a guanine (G) residue with queuine (Q) at position 34 (anticodon wobble position) in tRNAs with GU(N) anticodons (tRNA-Asp, -Asn, -His and -Tyr), resulting in the hypermodified nucleoside queuosine (7-(((4,5-cis-dihydroxy-2-cyclopenten-1-yl)amino)methyl)-7-deazaguanosine). Catalysis occurs through a double-displacement mechanism. The nucleophile active site attacks the C1' of nucleotide 34 to detach the guanine base from the RNA, forming a covalent enzyme-RNA intermediate. The proton acceptor active site deprotonates the incoming queuine, allowing a nucleophilic attack on the C1' of the ribose to form the product. Modification of cytoplasmic tRNAs with queuosine controls the elongation speed of cognate codons, thereby ensuring the correct folding of nascent proteins to maintain proteome integrity. The protein is Queuine tRNA-ribosyltransferase catalytic subunit 1 of Mus musculus (Mouse).